Consider the following 181-residue polypeptide: Trafficking protein particle complex subunit 3-like protein (181 aa).

Cys-68 carries the S-palmitoyl cysteine lipid modification.

Belongs to the TRAPP small subunits family. BET3 subfamily. Homodimer. Component of the multisubunit TRAPP (transport protein particle) complex, which includes at least TRAPPC2, TRAPPC2L, TRAPPC3, TRAPPC3L, TRAPPC4, TRAPPC5, TRAPPC8, TRAPPC9, TRAPPC10, TRAPPC11 and TRAPPC12.

It is found in the golgi apparatus. The protein resides in the cis-Golgi network. Its subcellular location is the endoplasmic reticulum. May play a role in vesicular transport from endoplasmic reticulum to Golgi. The sequence is that of Trafficking protein particle complex subunit 3-like protein (Trappc3l) from Mus musculus (Mouse).